Reading from the N-terminus, the 325-residue chain is Probable cell division protein WhiA (325 aa).

Positions 280 to 313 (SLKELGSMLKNPLGKSGVNHRLRKIDKIAEELRK) form a DNA-binding region, H-T-H motif.

It belongs to the WhiA family.

Functionally, involved in cell division and chromosome segregation. This chain is Probable cell division protein WhiA, found in Caldicellulosiruptor saccharolyticus (strain ATCC 43494 / DSM 8903 / Tp8T 6331).